The following is a 69-amino-acid chain: UPF0346 protein YuiB (69 aa).

The protein belongs to the UPF0346 family.

The chain is UPF0346 protein YuiB (yuiB) from Lactococcus lactis subsp. lactis (strain IL1403) (Streptococcus lactis).